The following is a 293-amino-acid chain: Protein nud-2 (293 aa).

The stretch at glutamate 36 to leucine 147 forms a coiled coil. A required for interaction with unc-83 isoform c region spans residues lysine 239 to alanine 293.

This sequence belongs to the nudE family. In terms of assembly, component of a dynein-regulating complex composed of at least lis-1 and nud-2. Interacts with lis-1; the interaction is direct. Interacts (via C-terminus) with unc-83; the interaction is direct, and is required for recruitment of nud-2 to the nuclear envelope. In terms of tissue distribution, expressed in ventral cord neurons, the pharynx, seam cells of the hypodermis and in vulval muscle cells.

It localises to the nucleus envelope. Its function is as follows. Part of a complex with lis-1, which is recruited to the nuclear envelope by unc-83, where, in turn, it recruits dynein to the nuclear surface and regulates nuclear migration in hypodermal precursor cells. Plays a role in GABAergic synaptic vesicle localization in the ventral nerve cord. This chain is Protein nud-2, found in Caenorhabditis elegans.